The following is a 493-amino-acid chain: EGF-containing fibulin-like extracellular matrix protein 1 (493 aa).

A signal peptide spans 1 to 17 (MLQTLFLTMLTLALVKS). The 46-residue stretch at 26–71 (YTQCTDGYEWDPIRQQCKDIDECDIVPDACKGGMKCVNHYGGYLCL) folds into the EGF-like 1; atypical domain. In terms of domain architecture, EGF-like 2; calcium-binding spans 173-213 (DIDECTSGTHNCRTDQVCINLRGSFTCQCLPGYQKRGEQCV). 15 disulfides stabilise this stretch: cysteine 177–cysteine 190, cysteine 184–cysteine 199, cysteine 201–cysteine 212, cysteine 218–cysteine 228, cysteine 224–cysteine 237, cysteine 239–cysteine 252, cysteine 258–cysteine 268, cysteine 264–cysteine 277, cysteine 279–cysteine 292, cysteine 298–cysteine 309, cysteine 305–cysteine 318, cysteine 320–cysteine 332, cysteine 338–cysteine 350, cysteine 344–cysteine 359, and cysteine 365–cysteine 377. Residues 214–253 (DIDECTVPPYCHQRCVNTPGSFYCQCSPGFQLAANNYTCV) form the EGF-like 3; calcium-binding domain. N-linked (GlcNAc...) asparagine glycosylation occurs at asparagine 249. The EGF-like 4; calcium-binding domain occupies 254–293 (DINECDASNQCAQQCYNILGSFICQCNQGYELSSDRLNCE). Residues 259 to 493 (DASNQCAQQC…LTIIVGPFSF (235 aa)) form a mediates interaction with TIMP3 region. The region spanning 294 to 333 (DIDECRTSSYLCQYQCVNEPGKFSCMCPQGYEVVRSRTCQ) is the EGF-like 5; calcium-binding domain. Residues 334-378 (DINECETTNECREDEMCWNYHGGFRCYPRNPCQDHYVLTSENRCV) enclose the EGF-like 6; calcium-binding domain.

Belongs to the fibulin family. Interacts with ECM1. Interacts with TIMP3. As to expression, expressed in the eye in the ciliary body, cornea, inner nuclear layer of the retina, and in the optic disk.

Its subcellular location is the secreted. It is found in the extracellular space. The protein localises to the extracellular matrix. Binds EGFR, the EGF receptor, inducing EGFR autophosphorylation and the activation of downstream signaling pathways. May play a role in cell adhesion and migration. May function as a negative regulator of chondrocyte differentiation. In the olfactory epithelium, it may regulate glial cell migration, differentiation and the ability of glial cells to support neuronal neurite outgrowth. The polypeptide is EGF-containing fibulin-like extracellular matrix protein 1 (Efemp1) (Mus musculus (Mouse)).